A 975-amino-acid chain; its full sequence is Glycine dehydrogenase (decarboxylating) (975 aa).

The residue at position 723 (Lys723) is an N6-(pyridoxal phosphate)lysine.

It belongs to the GcvP family. In terms of assembly, the glycine cleavage system is composed of four proteins: P, T, L and H. It depends on pyridoxal 5'-phosphate as a cofactor.

It catalyses the reaction N(6)-[(R)-lipoyl]-L-lysyl-[glycine-cleavage complex H protein] + glycine + H(+) = N(6)-[(R)-S(8)-aminomethyldihydrolipoyl]-L-lysyl-[glycine-cleavage complex H protein] + CO2. Its function is as follows. The glycine cleavage system catalyzes the degradation of glycine. The P protein binds the alpha-amino group of glycine through its pyridoxal phosphate cofactor; CO(2) is released and the remaining methylamine moiety is then transferred to the lipoamide cofactor of the H protein. The protein is Glycine dehydrogenase (decarboxylating) of Burkholderia thailandensis (strain ATCC 700388 / DSM 13276 / CCUG 48851 / CIP 106301 / E264).